The following is a 108-amino-acid chain: Succinate dehydrogenase assembly factor 4, mitochondrial (108 aa).

Over residues 33 to 46 (NNNNNNNNNNNNNN) the composition is skewed to low complexity. Disordered regions lie at residues 33–59 (NNNN…KENQ) and 79–108 (NPIT…VSDF). Basic and acidic residues predominate over residues 95–108 (RYNDWERNGRVSDF).

Belongs to the SDHAF4 family. Interacts with SdhA in its FAD-bound form.

Its subcellular location is the mitochondrion matrix. Functionally, plays an essential role in the assembly of succinate dehydrogenase (SDH), an enzyme complex (also referred to as respiratory complex II) that is a component of both the tricarboxylic acid (TCA) cycle and the mitochondrial electron transport chain, and which couples the oxidation of succinate to fumarate with the reduction of ubiquinone (coenzyme Q) to ubiquinol. Binds to the flavoprotein subunit SdhA in its FAD-bound form, blocking the generation of excess reactive oxygen species (ROS) and facilitating its assembly with the iron-sulfur protein subunit SdhB into the SDH catalytic dimer. The polypeptide is Succinate dehydrogenase assembly factor 4, mitochondrial (Dictyostelium discoideum (Social amoeba)).